A 344-amino-acid chain; its full sequence is uncharacterized protein (344 aa).

The N-terminal stretch at 1-28 (MNKKSLNIVATLGILLVLAFSGCVDQSA) is a signal peptide.

It belongs to the bacterial solute-binding protein 1 family. WtpA subfamily.

This is an uncharacterized protein from Methanococcus maripaludis (strain C7 / ATCC BAA-1331).